Reading from the N-terminus, the 62-residue chain is Alpha-conotoxin-like Qc1.2 (62 aa).

Positions 1-21 are cleaved as a signal peptide; sequence MGMRMMFTVFLLVALATTVAS. The propeptide occupies 22–48; it reads FTLDRASNGRNAAADDKPSDWIALAIK. Pyrrolidone carboxylic acid is present on Q49. 2 disulfides stabilise this stretch: C50–C56 and C51–C61.

This sequence belongs to the conotoxin A superfamily. In terms of tissue distribution, expressed by the venom duct.

It is found in the secreted. In terms of biological role, alpha-conotoxins bind to the nicotinic acetylcholine receptors (nAChR) and inhibit them. This synthetic peptide (10 uM) selectively, but weakly inhibits both rat neuronal alpha-3-beta-2/CHRNA3-CHRNB2 (63%) and alpha-3-beta-4/CHRNA3-CHRNB4 (37%) subtypes of nAChR. This is Alpha-conotoxin-like Qc1.2 from Conus quercinus (Oak cone).